The primary structure comprises 445 residues: DNA primase DnaG (445 aa).

In terms of domain architecture, Toprim spans 166 to 252; that stretch reads DAIVVVEGRS…SVEDLSRSEV (87 aa). Mg(2+) is bound by residues Glu-172, Asp-214, and Asp-216. A disordered region spans residues 276–355; sequence EEMSQAGEST…NGDGPTIPSL (80 aa). Low complexity predominate over residues 284–298; the sequence is STTADGGAVAAATSD. Positions 303–313 are enriched in polar residues; the sequence is NQPSPSSQTGS. Over residues 324–337 the composition is skewed to low complexity; it reads SVVDNSNATAVADA.

It belongs to the archaeal DnaG primase family. As to quaternary structure, forms a ternary complex with MCM helicase and DNA. The cofactor is Mg(2+).

It carries out the reaction ssDNA + n NTP = ssDNA/pppN(pN)n-1 hybrid + (n-1) diphosphate.. RNA polymerase that catalyzes the synthesis of short RNA molecules used as primers for DNA polymerase during DNA replication. This Haloarcula marismortui (strain ATCC 43049 / DSM 3752 / JCM 8966 / VKM B-1809) (Halobacterium marismortui) protein is DNA primase DnaG.